Here is a 112-residue protein sequence, read N- to C-terminus: UPF0122 protein CPE1714 (112 aa).

The protein belongs to the UPF0122 family.

In terms of biological role, might take part in the signal recognition particle (SRP) pathway. This is inferred from the conservation of its genetic proximity to ftsY/ffh. May be a regulatory protein. The sequence is that of UPF0122 protein CPE1714 from Clostridium perfringens (strain 13 / Type A).